The sequence spans 435 residues: Ribulose bisphosphate carboxylase large chain (435 aa).

Residues N104 and T154 each coordinate substrate. The Proton acceptor role is filled by K156. K158 contributes to the substrate binding site. Mg(2+) is bound by residues K182, D184, and E185. K182 bears the N6-carboxylysine mark. The Proton acceptor role is filled by H275. R276, H308, and S360 together coordinate substrate.

The protein belongs to the RuBisCO large chain family. Type I subfamily. Heterohexadecamer of 8 large chains and 8 small chains. Mg(2+) is required as a cofactor.

Its subcellular location is the plastid. The protein localises to the chloroplast. It carries out the reaction 2 (2R)-3-phosphoglycerate + 2 H(+) = D-ribulose 1,5-bisphosphate + CO2 + H2O. The catalysed reaction is D-ribulose 1,5-bisphosphate + O2 = 2-phosphoglycolate + (2R)-3-phosphoglycerate + 2 H(+). RuBisCO catalyzes two reactions: the carboxylation of D-ribulose 1,5-bisphosphate, the primary event in carbon dioxide fixation, as well as the oxidative fragmentation of the pentose substrate in the photorespiration process. Both reactions occur simultaneously and in competition at the same active site. The protein is Ribulose bisphosphate carboxylase large chain of Euglena pisciformis.